The chain runs to 84 residues: Small ribosomal subunit protein uS17 (84 aa).

It belongs to the universal ribosomal protein uS17 family. In terms of assembly, part of the 30S ribosomal subunit.

One of the primary rRNA binding proteins, it binds specifically to the 5'-end of 16S ribosomal RNA. This chain is Small ribosomal subunit protein uS17, found in Photorhabdus laumondii subsp. laumondii (strain DSM 15139 / CIP 105565 / TT01) (Photorhabdus luminescens subsp. laumondii).